We begin with the raw amino-acid sequence, 497 residues long: COP9 signalosome complex subunit 6 (497 aa).

The MPN domain maps to Val21 to Ile162. Disordered stretches follow at residues Ala230–Asp282, Tyr324–Pro350, and Ala435–His497. Over residues Ser236–Asp246 the composition is skewed to basic and acidic residues. Composition is skewed to low complexity over residues Ser258–Ala272 and Gln333–Gln343. Residues Arg440–Asn453 show a composition bias toward basic and acidic residues. Residues Val475–Pro488 are compositionally biased toward gly residues.

This sequence belongs to the peptidase M67A family. CSN6 subfamily. Component of the COP9 signalosome (CSN) complex.

The protein resides in the cytoplasm. The protein localises to the nucleus. Component of the COP9 signalosome (CSN) complex that acts as an regulator of the ubiquitin (Ubl) conjugation pathway by mediating the deneddylation of the cullin subunit of SCF-type E3 ubiquitin-protein ligase complexes. The CSN complex is involved in the regulation of the circadian clock through its control of the stability of the SCF(FWD1) complex. This Neurospora crassa (strain ATCC 24698 / 74-OR23-1A / CBS 708.71 / DSM 1257 / FGSC 987) protein is COP9 signalosome complex subunit 6 (csn-6).